We begin with the raw amino-acid sequence, 287 residues long: MPDFLGHAENPLREEEWARLNETVIQVARRSLVGRRILDIYGPLGAGVQTVPYDEFQGVSPGAVDIVGEQETAMVFTDARKFKTIPIIYKDFLLHWRDIEAARTHNMPLDVSAAAGAAALCAQQEDELIFYGDARLGYEGLMTANGRLTVPLGDWTSPGGGFQAIVEATRKLNEQGHFGPYAVVLSPRLYSQLHRIYEKTGVLEIETIRQLASDGVYQSNRLRGESGVVVSTGRENMDLAVSMDMVAAYLGASRMNHPFRVLEALLLRIKHPDAICTLEGAGATERR.

It belongs to the encapsulin family. Family 1 subfamily. In terms of assembly, the 32 nm encapsulin nanocompartment is formed by 180 subunits; monomers form pentamers which assemble to form shells. There are 36 pores where the pentamers meet as well as 3-fold axis channels and dimer channels. The N-terminus of the protein is inside the shell.

It localises to the encapsulin nanocompartment. Functionally, shell component of a type 1, iron-storage encapsulin nanocompartment. Encapsulin nanocompartments are 32 nm in diameter with an iron- and phosphorus-rich core (4Fe:1P) about 24 nm in diameter. Upon expression in E.coli most particles are 32 nm, 20% are 18 nm. The core is filled with an average of 14 dense granules, 5-6 nm in diameter that are not evenly distributed. Each nanocompartment is estimated to hold 30,000-35,000 Fe atoms. The minor proteins EncB, EncC and EncD probably lie against the interior face of the nanocompartment. The polypeptide is Type 1 encapsulin shell protein EncA (Myxococcus xanthus (strain DK1622)).